The following is a 483-amino-acid chain: Sodium/pantothenate symporter (483 aa).

Residues 1-2 (MQ) are Periplasmic-facing. The chain crosses the membrane as a helical span at residues 3-23 (LEVILPLVAYLVVVFGISVYA). The Cytoplasmic portion of the chain corresponds to 24–42 (MRKRSTGTFLNEYFLGSRS). A helical transmembrane segment spans residues 43–63 (MGGIVLAMTLTATYISASSFI). Residues 64 to 73 (GGPGAAYKYG) lie on the Periplasmic side of the membrane. A helical transmembrane segment spans residues 74–94 (LGWVLLAMIQLPAVWLSLGIL). The Cytoplasmic portion of the chain corresponds to 95–123 (GKKFAILARRYNAVTLNDMLFARYQSRLL). Residues 124–144 (VWLASLSLLVAFVGAMTVQFI) traverse the membrane as a helical segment. The Periplasmic segment spans residues 145–157 (GGARLLETAAGIP). The helical transmembrane segment at 158–178 (YETGLLIFGISIALYTAFGGF) threads the bilayer. Residues 179–189 (RASVLNDTMQG) lie on the Cytoplasmic side of the membrane. Residues 190–210 (LVMLIGTVVLLIGVVHAAGGL) traverse the membrane as a helical segment. Topologically, residues 211-232 (SNAVQTLQTIDPQLVTPQGADD) are periplasmic. The helical transmembrane segment at 233 to 253 (ILSPAFMTSFWVLVCFGVIGL) threads the bilayer. The Cytoplasmic segment spans residues 254–272 (PHTAVRCISYKDSKAVHRG). A helical membrane pass occupies residues 273–293 (IIIGTIVVAILMFGMHLAGAL). The Periplasmic segment spans residues 294-305 (GRAVIPDLTVPD). The chain crosses the membrane as a helical span at residues 306-326 (LVIPTLMVKVLPPFAAGIFLA). Topologically, residues 327 to 368 (APMAAIMSTINAQLLQSSATIIKDLYLNIRPDQMQNETRLKR) are cytoplasmic. The chain crosses the membrane as a helical span at residues 369-389 (MSAVITLVLGALLLLAAWKPP). Over 390 to 391 (EM) the chain is Periplasmic. A helical membrane pass occupies residues 392–412 (IIWLNLLAFGGLEAVFLWPLV). Residues 413–423 (LGLYWERANAK) lie on the Cytoplasmic side of the membrane. The helical transmembrane segment at 424–444 (GALSAMIVGGVLYAVLATLNI) threads the bilayer. Position 445 (Gln445) is a topological domain, periplasmic. A helical transmembrane segment spans residues 446–466 (YLGFHPIVPSLLLSLLAFLVG). Over 467–483 (NRFGTSVPQATVLTTDK) the chain is Cytoplasmic.

The protein belongs to the sodium:solute symporter (SSF) (TC 2.A.21) family.

The protein localises to the cell inner membrane. It catalyses the reaction (R)-pantothenate(in) + Na(+)(in) = (R)-pantothenate(out) + Na(+)(out). With respect to regulation, pantothenate uptake is not reduced in osmotically shocked cells or by ATP depletion with arsenate, but is reduced greater than 90% by the dissipation of the membrane electrochemical gradient with 2,4-dinitrophenol. In terms of biological role, catalyzes the sodium-dependent uptake of extracellular pantothenate. The protein is Sodium/pantothenate symporter of Escherichia coli (strain K12).